Consider the following 153-residue polypeptide: Histone H2B.3 (153 aa).

2 stretches are compositionally biased toward basic and acidic residues: residues 1 to 28 (MAPK…EKAP) and 36 to 53 (EKRL…EGRK). The interval 1–61 (MAPKAEKKPA…RKAGRKKAKK (61 aa)) is disordered. Lys7 and Lys37 each carry N6-acetyllysine. Lys149 is covalently cross-linked (Glycyl lysine isopeptide (Lys-Gly) (interchain with G-Cter in ubiquitin)).

This sequence belongs to the histone H2B family. The nucleosome is a histone octamer containing two molecules each of H2A, H2B, H3 and H4 assembled in one H3-H4 heterotetramer and two H2A-H2B heterodimers. The octamer wraps approximately 147 bp of DNA. In terms of processing, can be acetylated to form H2BK6ac and H2BK33ac. Monoubiquitinated by BRE1 to form H2BK143ub1 and deubiquitinated by UBP26. Required for heterochromatic histone H3 di- and trimethylation at H3K4me. May give a specific tag for epigenetic transcriptional activation.

It localises to the nucleus. The protein localises to the chromosome. Core component of nucleosome. Nucleosomes wrap and compact DNA into chromatin, limiting DNA accessibility to the cellular machineries which require DNA as a template. Histones thereby play a central role in transcription regulation, DNA repair, DNA replication and chromosomal stability. DNA accessibility is regulated via a complex set of post-translational modifications of histones, also called histone code, and nucleosome remodeling. The chain is Histone H2B.3 (H2B.3) from Oryza sativa subsp. japonica (Rice).